Consider the following 573-residue polypeptide: Urease subunit alpha (573 aa).

The 438-residue stretch at 136 to 573 (GAIDCHVHLI…LPMAQRYFLF (438 aa)) folds into the Urease domain. Ni(2+) is bound by residues histidine 141, histidine 143, and lysine 224. N6-carboxylysine is present on lysine 224. A substrate-binding site is contributed by histidine 226. Ni(2+)-binding residues include histidine 253 and histidine 279. Histidine 327 functions as the Proton donor in the catalytic mechanism. Aspartate 367 lines the Ni(2+) pocket.

Belongs to the metallo-dependent hydrolases superfamily. Urease alpha subunit family. Heterotrimer of UreA (gamma), UreB (beta) and UreC (alpha) subunits. Three heterotrimers associate to form the active enzyme. The cofactor is Ni cation. Post-translationally, carboxylation allows a single lysine to coordinate two nickel ions.

The protein localises to the cytoplasm. The enzyme catalyses urea + 2 H2O + H(+) = hydrogencarbonate + 2 NH4(+). Its pathway is nitrogen metabolism; urea degradation; CO(2) and NH(3) from urea (urease route): step 1/1. The chain is Urease subunit alpha from Mycolicibacterium vanbaalenii (strain DSM 7251 / JCM 13017 / BCRC 16820 / KCTC 9966 / NRRL B-24157 / PYR-1) (Mycobacterium vanbaalenii).